We begin with the raw amino-acid sequence, 946 residues long: Bifunctional lysine-specific demethylase and histidyl-hydroxylase NO66 (946 aa).

The disordered stretch occupies residues 14–435; the sequence is YRGSATSKNY…TSAASKKNTV (422 aa). Composition is skewed to polar residues over residues 17–28 and 37–46; these read SATSKNYVQKGT and AKNNNRNLAS. A compositionally biased stretch (low complexity) spans 59–73; the sequence is SGSYSDGDNGSSSSS. Over residues 99–110 the composition is skewed to polar residues; it reads TLNNHSSQSSPE. Residues 117 to 128 show a composition bias toward basic and acidic residues; sequence ESLKRRNDEAEG. Over residues 169-186 the composition is skewed to polar residues; that stretch reads TLNSHSSQSSPETPANTR. Residues 187–198 are compositionally biased toward basic and acidic residues; sequence ESLKRRTDEAEG. The span at 239–256 shows a compositional bias: polar residues; it reads TLNSHSYQSSPETPANTR. A compositionally biased stretch (basic and acidic residues) spans 257–268; it reads ESLKRRTDEAEG. Residue T309 is modified to Phosphothreonine. Residues 309–327 show a composition bias toward polar residues; it reads TLNSHSSQSSPETPANTRE. The span at 328-338 shows a compositional bias: basic and acidic residues; it reads SLNRRNYEAEG. S339 carries the phosphoserine modification. The span at 379-397 shows a compositional bias: polar residues; sequence TLNSHSSQSSPETPANTRE. Positions 398 to 408 are enriched in basic and acidic residues; sequence SLNRRNYEAEG. Residues 416-433 show a composition bias toward polar residues; that stretch reads RTSSTPVGQSTSAASKKN. Positions 606 to 742 constitute a JmjC domain; it reads NPSSYLVQLR…NLMEKLMPLV (137 aa). 3 residues coordinate Fe cation: H646, D648, and H708.

This sequence belongs to the ROX family. NO66 subfamily. Fe(2+) serves as cofactor.

The protein resides in the nucleus. It catalyses the reaction N(6),N(6)-dimethyl-L-lysyl(36)-[histone H3] + 2 2-oxoglutarate + 2 O2 = L-lysyl(36)-[histone H3] + 2 formaldehyde + 2 succinate + 2 CO2. Functionally, oxygenase that can act as both a histone lysine demethylase and a ribosomal histidine hydroxylase. Specifically demethylates 'Lys-4' (H3K4me) and 'Lys-36' (H3K36me) of histone H3, thereby playing a central role in histone code. The protein is Bifunctional lysine-specific demethylase and histidyl-hydroxylase NO66 of Drosophila pseudoobscura pseudoobscura (Fruit fly).